We begin with the raw amino-acid sequence, 142 residues long: Large ribosomal subunit protein uL11 (142 aa).

It belongs to the universal ribosomal protein uL11 family. In terms of assembly, part of the ribosomal stalk of the 50S ribosomal subunit. Interacts with L10 and the large rRNA to form the base of the stalk. L10 forms an elongated spine to which L12 dimers bind in a sequential fashion forming a multimeric L10(L12)X complex. One or more lysine residues are methylated.

In terms of biological role, forms part of the ribosomal stalk which helps the ribosome interact with GTP-bound translation factors. The protein is Large ribosomal subunit protein uL11 of Shewanella sediminis (strain HAW-EB3).